We begin with the raw amino-acid sequence, 118 residues long: Ribosome-binding factor A (118 aa).

It belongs to the RbfA family. In terms of assembly, monomer. Binds 30S ribosomal subunits, but not 50S ribosomal subunits or 70S ribosomes.

It localises to the cytoplasm. One of several proteins that assist in the late maturation steps of the functional core of the 30S ribosomal subunit. Associates with free 30S ribosomal subunits (but not with 30S subunits that are part of 70S ribosomes or polysomes). Required for efficient processing of 16S rRNA. May interact with the 5'-terminal helix region of 16S rRNA. The sequence is that of Ribosome-binding factor A from Bacillus cereus (strain ATCC 10987 / NRS 248).